The sequence spans 438 residues: Minor myo-inositol transporter IolF (438 aa).

12 helical membrane-spanning segments follow: residues 15 to 35 (IAAA…SAGL), 49 to 69 (IGLL…ALLG), 86 to 106 (MLVY…PMLL), 108 to 128 (GYII…TIIA), 147 to 167 (WAAG…LGLL), 171 to 191 (IVFA…IRLP), 230 to 250 (ILFL…MGFF), 268 to 288 (LLQM…FMPF), 295 to 312 (TVFG…TLFL), 317 to 334 (GLPI…NNGA), 359 to 379 (LMFF…PMII), and 387 to 407 (MAAI…LFAP).

The protein belongs to the major facilitator superfamily. Sugar transporter (TC 2.A.1.1) family.

It is found in the cell membrane. It participates in polyol metabolism; myo-inositol degradation into acetyl-CoA. In terms of biological role, minor myo-inositol uptake transporter. The sequence is that of Minor myo-inositol transporter IolF (iolF) from Bacillus subtilis (strain 168).